The sequence spans 209 residues: Ribosomal RNA large subunit methyltransferase E (209 aa).

5 residues coordinate S-adenosyl-L-methionine: Gly-63, Trp-65, Asp-83, Asp-99, and Asp-124. Residue Lys-164 is the Proton acceptor of the active site.

The protein belongs to the class I-like SAM-binding methyltransferase superfamily. RNA methyltransferase RlmE family.

It is found in the cytoplasm. It catalyses the reaction uridine(2552) in 23S rRNA + S-adenosyl-L-methionine = 2'-O-methyluridine(2552) in 23S rRNA + S-adenosyl-L-homocysteine + H(+). In terms of biological role, specifically methylates the uridine in position 2552 of 23S rRNA at the 2'-O position of the ribose in the fully assembled 50S ribosomal subunit. The protein is Ribosomal RNA large subunit methyltransferase E of Shewanella sp. (strain MR-7).